Reading from the N-terminus, the 235-residue chain is tRNA pseudouridine synthase B (235 aa).

Asp-48 functions as the Nucleophile in the catalytic mechanism.

Belongs to the pseudouridine synthase TruB family. Type 1 subfamily.

The catalysed reaction is uridine(55) in tRNA = pseudouridine(55) in tRNA. Responsible for synthesis of pseudouridine from uracil-55 in the psi GC loop of transfer RNAs. This Phocaeicola vulgatus (strain ATCC 8482 / DSM 1447 / JCM 5826 / CCUG 4940 / NBRC 14291 / NCTC 11154) (Bacteroides vulgatus) protein is tRNA pseudouridine synthase B.